Reading from the N-terminus, the 378-residue chain is Cytochrome b (378 aa).

4 helical membrane passes run 34–54 (FGSLLGLCLMLQILTGLFLAM), 78–99 (WFLRICHANGASFFFACLFMHV), 114–134 (WNTGVIILFLTMATGFLGYVL), and 179–199 (FFTFHFIFPFIILALMMIHLL). Positions 84 and 98 each coordinate heme b. Heme b is bound by residues histidine 183 and histidine 197. Histidine 202 contributes to the a ubiquinone binding site. Helical transmembrane passes span 227 to 247 (YKDIFGFIVFYWILIRFIWKF), 289 to 309 (LGGVIALVLSIAILLILPFTH), 321 to 341 (LNQILFWNMVVVASLLTWIGA), and 348 to 368 (YVLTGQILTVLYFSYFIINPL).

This sequence belongs to the cytochrome b family. The main subunits of complex b-c1 are: cytochrome b, cytochrome c1 and the Rieske protein. Heme b is required as a cofactor.

The protein resides in the mitochondrion inner membrane. In terms of biological role, component of the ubiquinol-cytochrome c reductase complex (complex III or cytochrome b-c1 complex) that is part of the mitochondrial respiratory chain. The b-c1 complex mediates electron transfer from ubiquinol to cytochrome c. Contributes to the generation of a proton gradient across the mitochondrial membrane that is then used for ATP synthesis. The chain is Cytochrome b (MT-CYB) from Anopheles quadrimaculatus (Common malaria mosquito).